The primary structure comprises 450 residues: Vacuolar cation/proton exchanger 1c (450 aa).

The Cytoplasmic segment spans residues 1 to 73; that stretch reads MAPPESSHHH…LLGGPAAQLQ (73 aa). A disordered region spans residues 28–52; the sequence is AAEEEEKKEAAAWTPSSSSSMTGRK. Residues 74-94 form a helical membrane-spanning segment; that stretch reads EVLLGTKLYPLFSAVPLAVAA. Over 95 to 101 the chain is Extracellular; that stretch reads ESLRLGR. Residues 102–122 form a helical membrane-spanning segment; that stretch reads VWVFAFSLIGLAPLAERVSFL. At 123–134 the chain is on the cytoplasmic side; that stretch reads SEHIANTVGPTA. A helical transmembrane segment spans residues 135–155; the sequence is GGIMNATCGNVPELIIALFAL. Positions 143 to 178 are cation selection; it reads GNVPELIIALFALHKNKMEILKWSLLGSILSNLLLV. The Extracellular portion of the chain corresponds to 156-170; the sequence is HKNKMEILKWSLLGS. A helical membrane pass occupies residues 171 to 191; it reads ILSNLLLVLGSSLLFGGIVNI. Over 192–201 the chain is Cytoplasmic; the sequence is GKERPLDKRQ. A helical membrane pass occupies residues 202–222; the sequence is ADVSIGLLLLGVLCHIATLVS. Residues 223–239 lie on the Extracellular side of the membrane; sequence KYTSSTGDSINSSSVMQ. A helical membrane pass occupies residues 240–260; sequence LSRSCAIVMLIAYFGSLMFQL. Residues 261 to 287 lie on the Cytoplasmic side of the membrane; it reads KTHRQIFELEEDSSDSSSSEDDATDKS. A helical transmembrane segment spans residues 288 to 308; that stretch reads VIGFASAMVWLIGMAVVTAML. The Extracellular segment spans residues 309–331; it reads SSYVVTTIEEASESMGIPVRFIS. The helical transmembrane segment at 332–352 threads the bilayer; it reads IILLPIVGNAAEHAGAIIFAF. Positions 339–374 are cation selection; that stretch reads GNAAEHAGAIIFAFKNKIDISLGITLGSATQISMLV. The Cytoplasmic segment spans residues 353 to 360; that stretch reads KNKIDISL. A helical membrane pass occupies residues 361–381; it reads GITLGSATQISMLVVPVILIV. Residues 382–385 lie on the Extracellular side of the membrane; sequence SWVN. The helical transmembrane segment at 386–406 threads the bilayer; the sequence is AIPMDLDFNLLETGSLAMAVI. The Cytoplasmic portion of the chain corresponds to 407–424; it reads TTAFTLQDDKWHYLKGLN. A helical membrane pass occupies residues 425-445; sequence LVFSYIVIAVCFFVMKALPTL. Over 446 to 450 the chain is Extracellular; it reads KKEDD.

This sequence belongs to the Ca(2+):cation antiporter (CaCA) (TC 2.A.19) family. Cation/proton exchanger (CAX) subfamily. Expressed in leaf blades.

The protein resides in the vacuole membrane. In terms of biological role, vacuolar cation/proton exchanger (CAX). Translocates Ca(2+) and other metal ions into vacuoles using the proton gradient formed by H(+)-ATPase and H(+)-pyrophosphatase. This Oryza sativa subsp. japonica (Rice) protein is Vacuolar cation/proton exchanger 1c (CAX1c).